The following is a 174-amino-acid chain: Co-chaperone protein HscB homolog (174 aa).

The J domain maps to N2–L74.

It belongs to the HscB family. As to quaternary structure, interacts with HscA and stimulates its ATPase activity.

Co-chaperone involved in the maturation of iron-sulfur cluster-containing proteins. Seems to help targeting proteins to be folded toward HscA. The sequence is that of Co-chaperone protein HscB homolog from Shewanella baltica (strain OS155 / ATCC BAA-1091).